The primary structure comprises 427 residues: Glucan 1,3-beta-glucosidase 2 (427 aa).

The signal sequence occupies residues 1-17 (MLISTFIISSLLSIALA). Catalysis depends on E217, which acts as the Proton donor. 2 cysteine pairs are disulfide-bonded: C299-C426 and C324-C355. Catalysis depends on E316, which acts as the Nucleophile.

It belongs to the glycosyl hydrolase 5 (cellulase A) family.

The protein localises to the secreted. The catalysed reaction is Successive hydrolysis of beta-D-glucose units from the non-reducing ends of (1-&gt;3)-beta-D-glucans, releasing alpha-glucose.. Its function is as follows. Beta-glucanases participate in the metabolism of beta-glucan, the main structural component of the cell wall. It could also function biosynthetically as a transglycosylase. The protein is Glucan 1,3-beta-glucosidase 2 (EXG2) of Wickerhamomyces anomalus (Yeast).